A 227-amino-acid chain; its full sequence is Heptaprenylglyceryl phosphate synthase (227 aa).

Residue lysine 13 participates in sn-glycerol 1-phosphate binding. Mg(2+) contacts are provided by aspartate 15 and threonine 41. Sn-glycerol 1-phosphate-binding positions include 159–164 (YLEYSG), glycine 189, and 209–210 (GN).

It belongs to the GGGP/HepGP synthase family. Group I subfamily. In terms of assembly, homodimer. Mg(2+) is required as a cofactor.

It carries out the reaction sn-glycerol 1-phosphate + all-trans-heptaprenyl diphosphate = 3-heptaprenyl-sn-glycero-1-phosphate + diphosphate. It participates in membrane lipid metabolism; glycerophospholipid metabolism. Prenyltransferase that catalyzes in vivo the transfer of the heptaprenyl moiety of heptaprenyl pyrophosphate (HepPP; 35 carbon atoms) to the C3 hydroxyl of sn-glycerol-1-phosphate (G1P), producing heptaprenylglyceryl phosphate (HepGP). This reaction is an ether-bond-formation step in the biosynthesis of archaea-type G1P-based membrane lipids found in Bacillales. The protein is Heptaprenylglyceryl phosphate synthase of Exiguobacterium sibiricum (strain DSM 17290 / CCUG 55495 / CIP 109462 / JCM 13490 / 255-15).